The following is a 383-amino-acid chain: L-lactate dehydrogenase (383 aa).

Positions 1–380 (MIIASTFDYR…TCESLVNTDA (380 aa)) constitute an FMN hydroxy acid dehydrogenase domain. Y24 is a binding site for substrate. FMN is bound by residues S106 and Q127. Y129 lines the substrate pocket. T155 contributes to the FMN binding site. R164 lines the substrate pocket. Residue K251 coordinates FMN. The Proton acceptor role is filled by H275. R278 provides a ligand contact to substrate. Residue 306-330 (DSGVRSGLDVVRMIAQGADAVMIGR) participates in FMN binding.

Belongs to the FMN-dependent alpha-hydroxy acid dehydrogenase family. FMN is required as a cofactor.

It localises to the cell inner membrane. The catalysed reaction is (S)-lactate + A = pyruvate + AH2. Functionally, catalyzes the conversion of L-lactate to pyruvate. Is coupled to the respiratory chain. The sequence is that of L-lactate dehydrogenase from Bartonella tribocorum (strain CIP 105476 / IBS 506).